The sequence spans 601 residues: Glutamyl-tRNA(Gln) amidotransferase subunit B, mitochondrial (601 aa).

The transit peptide at 1–55 (MLRPWLRQCPRATRSLACPQCHLPRPQTARRALRPLPALSLSHPIRSLQTTTTES) directs the protein to the mitochondrion.

Belongs to the GatB/GatE family. GatB subfamily. In terms of assembly, subunit of the heterotrimeric GatCAB amidotransferase (AdT) complex, composed of A, B and C subunits.

The protein resides in the mitochondrion. It catalyses the reaction L-glutamyl-tRNA(Gln) + L-glutamine + ATP + H2O = L-glutaminyl-tRNA(Gln) + L-glutamate + ADP + phosphate + H(+). Its function is as follows. Allows the formation of correctly charged Gln-tRNA(Gln) through the transamidation of misacylated Glu-tRNA(Gln) in the mitochondria. The reaction takes place in the presence of glutamine and ATP through an activated gamma-phospho-Glu-tRNA(Gln). The sequence is that of Glutamyl-tRNA(Gln) amidotransferase subunit B, mitochondrial from Aspergillus niger (strain ATCC MYA-4892 / CBS 513.88 / FGSC A1513).